We begin with the raw amino-acid sequence, 417 residues long: Succinate--CoA ligase [ADP-forming] subunit beta, mitochondrial (417 aa).

A mitochondrion-targeting transit peptide spans 1-24 (MLRKLANQSLSVAGKWQQQQLRRL). Residues 32 to 275 (AELMSKYGIN…SSQEDPREVA (244 aa)) enclose the ATP-grasp domain. ATP-binding positions include Lys71, 78 to 80 (GRG), and Glu138. 2 residues coordinate Mg(2+): Asn230 and Asp244. Residues Asn295 and 352-354 (GIM) contribute to the substrate site.

The protein belongs to the succinate/malate CoA ligase beta subunit family. In terms of assembly, heterodimer of an alpha and a beta subunit. It depends on Mg(2+) as a cofactor. In terms of tissue distribution, expressed in roots, stems, flowers, leaves and fruits.

The protein resides in the mitochondrion. The catalysed reaction is succinate + ATP + CoA = succinyl-CoA + ADP + phosphate. It participates in carbohydrate metabolism; tricarboxylic acid cycle; succinate from succinyl-CoA (ligase route): step 1/1. Succinyl-CoA synthetase functions in the citric acid cycle (TCA), coupling the hydrolysis of succinyl-CoA to the synthesis of ATP and thus represents the only step of substrate-level phosphorylation in the TCA. The beta subunit provides nucleotide specificity of the enzyme and binds the substrate succinate, while the binding sites for coenzyme A and phosphate are found in the alpha subunit. The polypeptide is Succinate--CoA ligase [ADP-forming] subunit beta, mitochondrial (Solanum lycopersicum (Tomato)).